The sequence spans 159 residues: MQKRAIYPGTFDPITNGHIDIVTRATQMFDHVILAIAASPSKKPMFTLEERVELAQQATAHLGNVEVVGFSDLMANFARNQHATVLIRGLRAVADFEYEMQLAHMNRHLMPELESVFLMPSKEWSFISSSLVKEVARHQGDVTHFLPENVHQALMAKLA.

T10 serves as a coordination point for substrate. Residues 10 to 11 and H18 contribute to the ATP site; that span reads TF. Substrate-binding residues include K42, M74, and R88. ATP-binding positions include 89–91, E99, and 124–130; these read GLR and WSFISSS.

Belongs to the bacterial CoaD family. In terms of assembly, homohexamer. It depends on Mg(2+) as a cofactor.

It localises to the cytoplasm. The enzyme catalyses (R)-4'-phosphopantetheine + ATP + H(+) = 3'-dephospho-CoA + diphosphate. Its pathway is cofactor biosynthesis; coenzyme A biosynthesis; CoA from (R)-pantothenate: step 4/5. Functionally, reversibly transfers an adenylyl group from ATP to 4'-phosphopantetheine, yielding dephospho-CoA (dPCoA) and pyrophosphate. The chain is Phosphopantetheine adenylyltransferase from Escherichia coli (strain UTI89 / UPEC).